Here is a 194-residue protein sequence, read N- to C-terminus: Phosphoheptose isomerase (194 aa).

The region spanning 37-194 (IAKSFKNKNK…IIEKEMKKIN (158 aa)) is the SIS domain. Substrate is bound at residue 52–54 (NGG). Residues histidine 61 and glutamate 65 each coordinate Zn(2+). Substrate is bound by residues glutamate 65, 93 to 94 (ND), 119 to 121 (STS), serine 124, and glutamine 172. Residues glutamine 172 and histidine 180 each coordinate Zn(2+).

This sequence belongs to the SIS family. GmhA subfamily. Homotetramer. Zn(2+) serves as cofactor.

The protein localises to the cytoplasm. It carries out the reaction 2 D-sedoheptulose 7-phosphate = D-glycero-alpha-D-manno-heptose 7-phosphate + D-glycero-beta-D-manno-heptose 7-phosphate. Its pathway is carbohydrate biosynthesis; D-glycero-D-manno-heptose 7-phosphate biosynthesis; D-glycero-alpha-D-manno-heptose 7-phosphate and D-glycero-beta-D-manno-heptose 7-phosphate from sedoheptulose 7-phosphate: step 1/1. Its function is as follows. Catalyzes the isomerization of sedoheptulose 7-phosphate in D-glycero-D-manno-heptose 7-phosphate. This Buchnera aphidicola subsp. Schizaphis graminum (strain Sg) protein is Phosphoheptose isomerase.